Consider the following 404-residue polypeptide: Bifunctional enzyme IspD/IspF (404 aa).

Residues 1–243 form a 2-C-methyl-D-erythritol 4-phosphate cytidylyltransferase region; that stretch reads MQAEEQFSCG…KLTRMAIPDV (243 aa). The interval 244–404 is 2-C-methyl-D-erythritol 2,4-cyclodiphosphate synthase; it reads RTGNGYDVHQ…TVVYASGGDA (161 aa). A divalent metal cation is bound by residues Asp-250 and His-252. 4-CDP-2-C-methyl-D-erythritol 2-phosphate-binding positions include 250 to 252 and 276 to 277; these read DVH and HS. His-284 lines the a divalent metal cation pocket. 4-CDP-2-C-methyl-D-erythritol 2-phosphate is bound by residues 298 to 300, 374 to 377, Phe-381, and Arg-384; these read DIG and TTNE.

In the N-terminal section; belongs to the IspD/TarI cytidylyltransferase family. IspD subfamily. It in the C-terminal section; belongs to the IspF family. Requires a divalent metal cation as cofactor.

The catalysed reaction is 2-C-methyl-D-erythritol 4-phosphate + CTP + H(+) = 4-CDP-2-C-methyl-D-erythritol + diphosphate. It carries out the reaction 4-CDP-2-C-methyl-D-erythritol 2-phosphate = 2-C-methyl-D-erythritol 2,4-cyclic diphosphate + CMP. Its pathway is isoprenoid biosynthesis; isopentenyl diphosphate biosynthesis via DXP pathway; isopentenyl diphosphate from 1-deoxy-D-xylulose 5-phosphate: step 2/6. It participates in isoprenoid biosynthesis; isopentenyl diphosphate biosynthesis via DXP pathway; isopentenyl diphosphate from 1-deoxy-D-xylulose 5-phosphate: step 4/6. Bifunctional enzyme that catalyzes the formation of 4-diphosphocytidyl-2-C-methyl-D-erythritol from CTP and 2-C-methyl-D-erythritol 4-phosphate (MEP) (IspD), and catalyzes the conversion of 4-diphosphocytidyl-2-C-methyl-D-erythritol 2-phosphate (CDP-ME2P) to 2-C-methyl-D-erythritol 2,4-cyclodiphosphate (ME-CPP) with a corresponding release of cytidine 5-monophosphate (CMP) (IspF). This Sinorhizobium medicae (strain WSM419) (Ensifer medicae) protein is Bifunctional enzyme IspD/IspF.